A 241-amino-acid chain; its full sequence is uncharacterized protein (241 aa).

An HTH cro/C1-type domain is found at 32 to 86; sequence LKKWRNLFNIQQIELAKYLNVSPSVISDYEVGRRKNPGVNIIKKYVLALIEIDKE. A DNA-binding region (H-T-H motif) is located at residues 43–62; the sequence is QIELAKYLNVSPSVISDYEV.

This is an uncharacterized protein from Methanocaldococcus jannaschii (strain ATCC 43067 / DSM 2661 / JAL-1 / JCM 10045 / NBRC 100440) (Methanococcus jannaschii).